The following is a 184-amino-acid chain: dTTP/UTP pyrophosphatase (184 aa).

Catalysis depends on Asp-65, which acts as the Proton acceptor.

This sequence belongs to the Maf family. YhdE subfamily. A divalent metal cation is required as a cofactor.

It is found in the cytoplasm. The catalysed reaction is dTTP + H2O = dTMP + diphosphate + H(+). It catalyses the reaction UTP + H2O = UMP + diphosphate + H(+). Its function is as follows. Nucleoside triphosphate pyrophosphatase that hydrolyzes dTTP and UTP. May have a dual role in cell division arrest and in preventing the incorporation of modified nucleotides into cellular nucleic acids. In Thermococcus onnurineus (strain NA1), this protein is dTTP/UTP pyrophosphatase.